The primary structure comprises 377 residues: Gibberellin 20 oxidase 1 (377 aa).

A Fe2OG dioxygenase domain is found at 222–322 (ENDSIMRLNY…RKSLAFFLCP (101 aa)). His-247, Asp-249, and His-303 together coordinate Fe cation. Arg-313 is a catalytic residue.

The protein belongs to the iron/ascorbate-dependent oxidoreductase family. GA20OX subfamily. Fe(2+) serves as cofactor. Requires L-ascorbate as cofactor. In terms of tissue distribution, highly expressed in stems and inflorescence tissues. Detected in seeds, roots, leaves and siliques.

The enzyme catalyses gibberellin A12 + 2 2-oxoglutarate + 3 O2 + H(+) = gibberellin A9 + 2 succinate + 3 CO2 + 2 H2O. It catalyses the reaction gibberellin A12 + 2-oxoglutarate + O2 = gibberellin A15 + succinate + CO2. The catalysed reaction is gibberellin A15 + 2-oxoglutarate + O2 = gibberellin A24 + succinate + CO2 + H2O. It carries out the reaction gibberellin A53 + 2-oxoglutarate + O2 = gibberellin A44 + succinate + CO2. It functions in the pathway plant hormone biosynthesis; gibberellin biosynthesis. Key oxidase enzyme in the biosynthesis of gibberellin that catalyzes the conversion of GA12 to GA9, via a three-step oxidation at C-20 of the GA skeleton. GA53 is less effectively oxidized than GA12 and is only oxidized one step to GA44. Involved in the promotion of the floral transition, fertility and silique elongation, but plays only a minor role in elongation of seedling organs. Acts redundantly with GA20OX2. The polypeptide is Gibberellin 20 oxidase 1 (GA20OX1) (Arabidopsis thaliana (Mouse-ear cress)).